The sequence spans 141 residues: uncharacterized protein (141 aa).

Basic and acidic residues predominate over residues 1–17 (MNKSESENDSEYHKEYS). The interval 1–24 (MNKSESENDSEYHKEYSESSDPED) is disordered. The stretch at 52–115 (IQNLNNNVKE…QMLFEKMRDM (64 aa)) forms a coiled coil.

This is an uncharacterized protein from Acanthamoeba polyphaga (Amoeba).